The following is a 347-amino-acid chain: NADH-ubiquinone oxidoreductase chain 2 (347 aa).

A run of 10 helical transmembrane segments spans residues 1 to 21 (MNPL…TIVM), 25 to 45 (HWLV…PVLM), 59 to 79 (YFLT…INLI), 96 to 116 (IIMT…FWVP), 122 to 142 (IQLS…ISIL), 150 to 170 (NLNL…WGGL), 201 to 221 (ALLN…VFML), 242 to 262 (TALL…GFLP), 274 to 294 (NSVI…YFYM), and 326 to 346 (LSPL…LTLL).

It belongs to the complex I subunit 2 family. In terms of assembly, core subunit of respiratory chain NADH dehydrogenase (Complex I) which is composed of 45 different subunits. Interacts with TMEM242.

It localises to the mitochondrion inner membrane. The enzyme catalyses a ubiquinone + NADH + 5 H(+)(in) = a ubiquinol + NAD(+) + 4 H(+)(out). In terms of biological role, core subunit of the mitochondrial membrane respiratory chain NADH dehydrogenase (Complex I) which catalyzes electron transfer from NADH through the respiratory chain, using ubiquinone as an electron acceptor. Essential for the catalytic activity and assembly of complex I. In Eidolon helvum (Straw-colored fruit bat), this protein is NADH-ubiquinone oxidoreductase chain 2.